Consider the following 414-residue polypeptide: Histidine--tRNA ligase (414 aa).

It belongs to the class-II aminoacyl-tRNA synthetase family. Homodimer.

It localises to the cytoplasm. The enzyme catalyses tRNA(His) + L-histidine + ATP = L-histidyl-tRNA(His) + AMP + diphosphate + H(+). This chain is Histidine--tRNA ligase (hisS), found in Mycoplasma pneumoniae (strain ATCC 29342 / M129 / Subtype 1) (Mycoplasmoides pneumoniae).